Reading from the N-terminus, the 90-residue chain is Chaplin-G (90 aa).

A signal peptide spans 1–27 (MSRIAKAAGVALGTGAVVLSGTGMAMA). The region spanning 38–78 (SPGVLSGNVVQVPVHVPVNLCGNTIDVIGLLNPAFGNACEN) is the Chaplin domain. An intrachain disulfide couples Cys58 to Cys76.

This sequence belongs to the chaplin family. Short chaplin subfamily.

It localises to the cell surface. It is found in the secreted. Its subcellular location is the cell wall. Its function is as follows. One of 8 partially redundant surface-active proteins required for efficient formation of aerial mycelium; the short chaplins assemble into a hydrophobic, amyloidal fibrillar surface layer that envelopes and protects aerial hyphae and spores, presumably anchored to the long chaplins. Chaplins have an overlapping function with the surface-active SapB peptide; chaplins are essential on minimal medium while on rich medium both chaplins and SapB are required for efficient aerial hyphae formation. Chaplins are also involved in cell attachment to a hydrophobic surface. Forms amyloid fibrils in vitro probably composed of stacked beta-sheets, at low extracellular concentrations individually restores the ability to form aerial hyphae to a chaplin-deficient strain. A small chaplin extract (ChpD, ChpE, ChpF, ChpG and ChpH) self-assembles into 2 different amyloids; small fibrils at the air-water interface form an amphipathic membrane that resembles spore-surface structures involved in aerial hyphae formation, and hydrophilic fibrils in solution that resemble the fibers that attach cells to a hydrophobic surface. At the air-water interface the hydrophilic surface is in contact with water (probably equivalent to the peptidoglycan layer), while the hydrophobic face is exposed to the air, making the surface of the aerial hyphae hydrophobic. A small chaplin extract applied to a chaplin-deficient strain restores aerial hyphae formation. The small chaplin extract forms an amyloid-like structure similar to that seen on the surface of cells without rodlets (rdlA-rdlB deletions), and is highly surface active, reducing surface tension from 72 to 26 mJ/m(2), which probably allows escape of hyphae from an aqueous environment into air. ChpF and ChpG are sufficient to restore the rodlet layer and hydrophobicity to a strain deleted for the other 6 chaplin genes. This Streptomyces coelicolor (strain ATCC BAA-471 / A3(2) / M145) protein is Chaplin-G.